The primary structure comprises 266 residues: MATDRQYEDLLRLVLDTGTAKGDRTGTGTRSIFGHQLRYDLSAGFPLITTKKVHLKSIVYELLWFLRGDSNVGWLREHGVTIWDEWADPQGELGPVYGVQWRSWPTPDGTHIDQISQVLQTLRTDPDSRRMIVSAWNVAELDRMALAPCHAFFQFYVADGKLSCQLYQRSADLFLGVPFNIASYALLTHMVAQQTELEPGEFIWTGGDCHIYDNHVEQVTEQLGREPYPFPRLELRPAPSLFDYRFEDVTVTDYRHHPAIKAPVAV.

Residue Arg-24 coordinates dUMP. Residue His-54 participates in (6R)-5,10-methylene-5,6,7,8-tetrahydrofolate binding. 129–130 is a dUMP binding site; sequence RR. Cys-149 serves as the catalytic Nucleophile. DUMP is bound by residues 169 to 172, Asn-180, and 210 to 212; these read RSAD and HIY. Asp-172 provides a ligand contact to (6R)-5,10-methylene-5,6,7,8-tetrahydrofolate. Ala-265 contacts (6R)-5,10-methylene-5,6,7,8-tetrahydrofolate.

It belongs to the thymidylate synthase family. Bacterial-type ThyA subfamily. In terms of assembly, homodimer.

The protein localises to the cytoplasm. The catalysed reaction is dUMP + (6R)-5,10-methylene-5,6,7,8-tetrahydrofolate = 7,8-dihydrofolate + dTMP. It functions in the pathway pyrimidine metabolism; dTTP biosynthesis. Catalyzes the reductive methylation of 2'-deoxyuridine-5'-monophosphate (dUMP) to 2'-deoxythymidine-5'-monophosphate (dTMP) while utilizing 5,10-methylenetetrahydrofolate (mTHF) as the methyl donor and reductant in the reaction, yielding dihydrofolate (DHF) as a by-product. This enzymatic reaction provides an intracellular de novo source of dTMP, an essential precursor for DNA biosynthesis. This Nocardia farcinica (strain IFM 10152) protein is Thymidylate synthase.